The primary structure comprises 886 residues: Conserved oligomeric Golgi complex subunit 1 (886 aa).

A compositionally biased stretch (basic and acidic residues) spans 834–846 (SAERKSPIQEPVE). A disordered region spans residues 834–886 (SAERKSPIQEPVEKTATTTPTRKSGGNGARKGDSSKSKSSAASFFGMSQEWFR). Ser839 is subject to Phosphoserine. The span at 848 to 857 (TATTTPTRKS) shows a compositional bias: polar residues.

It belongs to the COG1 family. In terms of assembly, component of the conserved oligomeric Golgi complex which is composed of eight different subunits and is required for normal Golgi morphology and localization.

The protein localises to the golgi apparatus membrane. Required for normal Golgi function. This is Conserved oligomeric Golgi complex subunit 1 from Drosophila melanogaster (Fruit fly).